Here is a 148-residue protein sequence, read N- to C-terminus: Deoxyuridine 5'-triphosphate nucleotidohydrolase (148 aa).

Substrate contacts are provided by residues 68 to 70 (RSG), Asn-81, 85 to 87 (TID), and Lys-95.

It belongs to the dUTPase family. Mg(2+) is required as a cofactor.

The catalysed reaction is dUTP + H2O = dUMP + diphosphate + H(+). It participates in pyrimidine metabolism; dUMP biosynthesis; dUMP from dCTP (dUTP route): step 2/2. This enzyme is involved in nucleotide metabolism: it produces dUMP, the immediate precursor of thymidine nucleotides and it decreases the intracellular concentration of dUTP so that uracil cannot be incorporated into DNA. The polypeptide is Deoxyuridine 5'-triphosphate nucleotidohydrolase (Rickettsia typhi (strain ATCC VR-144 / Wilmington)).